A 25-amino-acid polypeptide reads, in one-letter code: Arginine attenuator peptide (25 aa).

This sequence belongs to the arginine attenuator peptide family.

In terms of biological role, arginine attenuator peptide (AAP) that has a regulatory role in the production of arginine-specific carbamoyl phosphate synthetase. Encoded by an upstream open reading frame (uORF) within the 5'-leader region of arginine-specific carbamoyl phosphate synthetase small chain (CPA1) mRNA, it attenuates the translation of the downstream CPA1 ORF. In the presence of high concentrations of arginine, ribosomes translating the uORF encoding AAP stall at the termination codon, resulting in reduced translation from the downstream CPA1 initiation codon. The polypeptide is Arginine attenuator peptide (Saccharomyces cerevisiae (strain ATCC 204508 / S288c) (Baker's yeast)).